The following is a 269-amino-acid chain: Phycobilisome 37.5 kDa linker polypeptide, phycocyanin-associated, rod (269 aa).

Residues 2–177 form the PBS-linker domain; that stretch reads TSSTAARQLG…IYRGYANSDR (176 aa). The 53-residue stretch at 217 to 269 folds into the CpcD-like domain; it reads GQLYRVRVIQADRGRTTQIRRSIQEYLVSYDQLSPTLQRLNQRGSRVVNISPA.

The protein belongs to the phycobilisome linker protein family.

It localises to the cellular thylakoid membrane. Functionally, rod linker protein, associated with phycocyanin. Linker polypeptides determine the state of aggregation and the location of the disk-shaped phycobiliprotein units within the phycobilisome and modulate their spectroscopic properties in order to mediate a directed and optimal energy transfer. The chain is Phycobilisome 37.5 kDa linker polypeptide, phycocyanin-associated, rod (cpcH2) from Microchaete diplosiphon (Fremyella diplosiphon).